Reading from the N-terminus, the 169-residue chain is MAPKKAKRRAAAEGSSNVFSMFDQTQIQEFKEAFTVIDQNRDGIIDKEDLRDTFAAMGRLNVKNEELDAMMKEASGPINFTVFLTMFGEKLKGADPEDVITGAFKVLDPEGKGTIKKQFLEELLTTQCDRFSQEEIKNMWAAFPPDVGGNVDYKNICYVITHGDAKDQE.

Ala2 carries the post-translational modification N,N,N-trimethylalanine. 2 positions are modified to phosphoserine: Ser15 and Ser16. Residues Thr25 and Thr35 each carry the phosphothreonine modification. Residues 25 to 60 (TQIQEFKEAFTVIDQNRDGIIDKEDLRDTFAAMGRL) form the EF-hand 1 domain. Positions 38, 40, 42, and 49 each coordinate Ca(2+). Ser75 is modified (phosphoserine). 2 consecutive EF-hand domains span residues 95–130 (DPED…QCDR) and 131–166 (FSQE…GDAK). Thr101 bears the Phosphothreonine mark.

Myosin is a hexamer of 2 heavy chains and 4 light chains.

Myosin regulatory subunit that plays an essential to maintain muscle integrity during early development. Plays a role in muscle contraction. This chain is Myosin regulatory light chain 11 (Myl11), found in Rattus norvegicus (Rat).